We begin with the raw amino-acid sequence, 234 residues long: Glutathione S-transferase 1 (234 aa).

Residues leucine 3–histidine 90 enclose the GST N-terminal domain. Residues aspartate 96–phenylalanine 234 enclose the GST C-terminal domain.

This sequence belongs to the GST superfamily. As to quaternary structure, homodimer.

The protein localises to the endoplasmic reticulum membrane. The catalysed reaction is RX + glutathione = an S-substituted glutathione + a halide anion + H(+). This chain is Glutathione S-transferase 1 (GTT1), found in Saccharomyces cerevisiae (strain ATCC 204508 / S288c) (Baker's yeast).